The primary structure comprises 212 residues: Large ribosomal subunit protein uL3 (212 aa).

An N5-methylglutamine modification is found at Gln-153.

It belongs to the universal ribosomal protein uL3 family. Part of the 50S ribosomal subunit. Forms a cluster with proteins L14 and L19. Methylated by PrmB.

One of the primary rRNA binding proteins, it binds directly near the 3'-end of the 23S rRNA, where it nucleates assembly of the 50S subunit. In Shewanella halifaxensis (strain HAW-EB4), this protein is Large ribosomal subunit protein uL3.